Reading from the N-terminus, the 160-residue chain is Small ribosomal subunit protein uS10m (160 aa).

It belongs to the universal ribosomal protein uS10 family. Component of the mitochondrial ribosome small subunit (28S) which comprises a 12S rRNA and about 30 distinct proteins.

It localises to the mitochondrion. This Mus musculus (Mouse) protein is Small ribosomal subunit protein uS10m (Mrps10).